Consider the following 207-residue polypeptide: MAEYTLPDLDYDYSALEPHISGQINELHHSKHHAAYVAGANTALEKLEAAREAGDHSAIFLHEKNLAFHLGGHVNHSIWWKNLSPNGGDKPVGELAAAIDDQFGSFDKFRAQFTAAANGLQGSGWAVLGYDTLGQKLLTFQLYDQQANVPLGIIPLLQVDMWEHAFYLQYKNVKADYVTAFWNVVNWADVQDRFGKAVNQGKGLIFG.

The Mn(2+) site is built by histidine 28, histidine 76, aspartate 160, and histidine 164.

Belongs to the iron/manganese superoxide dismutase family. It depends on Mn(2+) as a cofactor.

It catalyses the reaction 2 superoxide + 2 H(+) = H2O2 + O2. Functionally, destroys superoxide anion radicals which are normally produced within the cells and which are toxic to biological systems. The chain is Superoxide dismutase [Mn] (sodA) from Nocardia asteroides.